Consider the following 199-residue polypeptide: Probable chemoreceptor glutamine deamidase CheD (199 aa).

The protein belongs to the CheD family.

It carries out the reaction L-glutaminyl-[protein] + H2O = L-glutamyl-[protein] + NH4(+). Probably deamidates glutamine residues to glutamate on methyl-accepting chemotaxis receptors (MCPs), playing an important role in chemotaxis. This is Probable chemoreceptor glutamine deamidase CheD from Cereibacter sphaeroides (strain ATCC 17029 / ATH 2.4.9) (Rhodobacter sphaeroides).